We begin with the raw amino-acid sequence, 149 residues long: C-type lectin domain family 2 member B (149 aa).

The Cytoplasmic portion of the chain corresponds to 1–7 (MMTKHKK). The chain crosses the membrane as a helical; Signal-anchor for type II membrane protein span at residues 8 to 25 (CFIIVGVLITTNIITLIV). At 26 to 149 (KLTRDSQSLC…RKWICRKRIH (124 aa)) the chain is on the extracellular side. The cysteines at positions 35 and 46 are disulfide-linked. The C-type lectin domain maps to 42 to 145 (FQNKCYYFSK…CYTERKWICR (104 aa)). N57, N62, and N100 each carry an N-linked (GlcNAc...) asparagine glycan. Intrachain disulfides connect C63-C144 and C123-C136.

In terms of assembly, homodimer. Interacts with NKp80/KLRF1. In terms of processing, (Microbial infection) Ubiquitinated by human herpesvirus 8 protein K5, leading to endolysosomal degradation. Post-translationally, N-linked glycosylated; required to enable surface expression and the extent of surface expression correlates with the number of functional conventional N-glycosylation sites. In terms of tissue distribution, expressed preferentially in lymphoid tissues, and in most hematopoietic cell types.

Its subcellular location is the cell membrane. It is found in the golgi apparatus membrane. Its function is as follows. Membrane-bound protein expressed on myeloid cells which acts as a ligand to stimulate the activating receptor NKp80/KLRF1, expressed on the surface of natural killer (NK) cells. In turn, stimulates NK-cell cytotoxicity and cytokine production leading to the cytolysis of malignant CLEC2B-expressing myeloid cells. This chain is C-type lectin domain family 2 member B (CLEC2B), found in Homo sapiens (Human).